Reading from the N-terminus, the 361-residue chain is Phosphoserine aminotransferase (361 aa).

Residue Arg42 coordinates L-glutamate. Pyridoxal 5'-phosphate contacts are provided by residues 76–77, Trp102, Thr153, Asp173, and Gln196; that span reads AR. Position 197 is an N6-(pyridoxal phosphate)lysine (Lys197). 238–239 serves as a coordination point for pyridoxal 5'-phosphate; the sequence is NT.

Belongs to the class-V pyridoxal-phosphate-dependent aminotransferase family. SerC subfamily. In terms of assembly, homodimer. Requires pyridoxal 5'-phosphate as cofactor.

It is found in the cytoplasm. It carries out the reaction O-phospho-L-serine + 2-oxoglutarate = 3-phosphooxypyruvate + L-glutamate. The catalysed reaction is 4-(phosphooxy)-L-threonine + 2-oxoglutarate = (R)-3-hydroxy-2-oxo-4-phosphooxybutanoate + L-glutamate. Its pathway is amino-acid biosynthesis; L-serine biosynthesis; L-serine from 3-phospho-D-glycerate: step 2/3. It functions in the pathway cofactor biosynthesis; pyridoxine 5'-phosphate biosynthesis; pyridoxine 5'-phosphate from D-erythrose 4-phosphate: step 3/5. Functionally, catalyzes the reversible conversion of 3-phosphohydroxypyruvate to phosphoserine and of 3-hydroxy-2-oxo-4-phosphonooxybutanoate to phosphohydroxythreonine. The protein is Phosphoserine aminotransferase of Yersinia pestis bv. Antiqua (strain Angola).